The sequence spans 88 residues: Thioredoxin-2 (88 aa).

Residues 2-88 enclose the Thioredoxin domain; sequence SRVIHISSNE…YRNGAKVSEF (87 aa). Catalysis depends on nucleophile residues C31 and C34. A disulfide bridge links C31 with C34.

The protein belongs to the thioredoxin family.

In terms of biological role, participates in various redox reactions through the reversible oxidation of its active center dithiol to a disulfide and catalyzes dithiol-disulfide exchange reactions. This chain is Thioredoxin-2 (trxB), found in Dictyostelium discoideum (Social amoeba).